We begin with the raw amino-acid sequence, 89 residues long: Small ribosomal subunit protein uS15 (89 aa).

A compositionally biased stretch (basic and acidic residues) spans 1–10 (MSITAERKAE). Positions 1-24 (MSITAERKAEVIQGNANKAGDTGS) are disordered.

The protein belongs to the universal ribosomal protein uS15 family. Part of the 30S ribosomal subunit. Forms a bridge to the 50S subunit in the 70S ribosome, contacting the 23S rRNA.

In terms of biological role, one of the primary rRNA binding proteins, it binds directly to 16S rRNA where it helps nucleate assembly of the platform of the 30S subunit by binding and bridging several RNA helices of the 16S rRNA. Forms an intersubunit bridge (bridge B4) with the 23S rRNA of the 50S subunit in the ribosome. The sequence is that of Small ribosomal subunit protein uS15 from Rhodopseudomonas palustris (strain HaA2).